A 505-amino-acid chain; its full sequence is Deoxyguanosinetriphosphate triphosphohydrolase (505 aa).

An HD domain is found at R66–C273.

It belongs to the dGTPase family. Type 1 subfamily. Homotetramer. Requires Mg(2+) as cofactor.

It catalyses the reaction dGTP + H2O = 2'-deoxyguanosine + triphosphate + H(+). Its activity is regulated as follows. Inhibited by the action of reducing agents such as dithiothreitol and 2-mercaptoethanol. Functionally, dGTPase preferentially hydrolyzes dGTP over the other canonical NTPs. In Shigella boydii, this protein is Deoxyguanosinetriphosphate triphosphohydrolase.